Consider the following 500-residue polypeptide: ATP synthase subunit alpha (500 aa).

169-176 serves as a coordination point for ATP; sequence GDRQTGKT.

The protein belongs to the ATPase alpha/beta chains family. In terms of assembly, F-type ATPases have 2 components, CF(1) - the catalytic core - and CF(0) - the membrane proton channel. CF(1) has five subunits: alpha(3), beta(3), gamma(1), delta(1), epsilon(1). CF(0) has three main subunits: a(1), b(2) and c(9-12). The alpha and beta chains form an alternating ring which encloses part of the gamma chain. CF(1) is attached to CF(0) by a central stalk formed by the gamma and epsilon chains, while a peripheral stalk is formed by the delta and b chains.

Its subcellular location is the cell inner membrane. The enzyme catalyses ATP + H2O + 4 H(+)(in) = ADP + phosphate + 5 H(+)(out). Functionally, produces ATP from ADP in the presence of a proton gradient across the membrane. The alpha chain is a regulatory subunit. This Fusobacterium nucleatum subsp. nucleatum (strain ATCC 25586 / DSM 15643 / BCRC 10681 / CIP 101130 / JCM 8532 / KCTC 2640 / LMG 13131 / VPI 4355) protein is ATP synthase subunit alpha.